Here is a 465-residue protein sequence, read N- to C-terminus: MRSASTLAVCAATLLQIACSTPIHPFHARSHQSYPSTEQWPLPVVGKQLEHQVPDEDLQEILSQISRDNIESTIRKLASFGTRHTLSSQTDPVRGIGAARTWLTAKFQEAADESEGRMTVDWNSFIKYPGDNERIIFPVNITTVVATLKGSEDPDRYYLTGGHYDSRNSNPIDYQGDAPGAVDDASGVAVSLELARIFAHYKPKATIVFTAFAGEEQGLLGAQNLAQTYKNASVNLAAMINLDMVGNSKAEDGTTDPHNIRLFCQGTPLTENASTTTSRLSIGGDNDSPARNLGRFIYEVASNAWTEMTAGYTGVRFVQPNEDYTQQHQNVTVRNGKQYGDLTQWLDFEYNTRAAKVVASTMWSLANAPAAPTNVGVNTTMSDNFSQFKWDAPKGLSVQGYEILYRETIEPHWTNVIDLGNVTWYNLTSATIHKDNVIFGVRSVGKGGYKSPAVLPFPFGCARNC.

Residues 1 to 20 form the signal peptide; that stretch reads MRSASTLAVCAATLLQIACS. N140 is a glycosylation site (N-linked (GlcNAc...) asparagine). The Zn(2+) site is built by H163, D183, and E216. N231 is a glycosylation site (N-linked (GlcNAc...) asparagine). Residue D243 coordinates Zn(2+). N272, N330, N378, N384, N421, and N426 each carry an N-linked (GlcNAc...) asparagine glycan. Residues 371–464 form the Fibronectin type-III domain; that stretch reads APTNVGVNTT…LPFPFGCARN (94 aa).

It belongs to the peptidase M28 family. M28B subfamily. Requires Zn(2+) as cofactor.

The protein resides in the secreted. The polypeptide is Probable zinc metalloprotease PTT_17836 (Pyrenophora teres f. teres (strain 0-1) (Barley net blotch fungus)).